The primary structure comprises 383 residues: tRNA(Met) cytidine acetate ligase (383 aa).

Residues Ile7–Leu20, Gly101, Asn153, and Arg178–Ile179 contribute to the ATP site.

It belongs to the TmcAL family.

The protein localises to the cytoplasm. The catalysed reaction is cytidine(34) in elongator tRNA(Met) + acetate + ATP = N(4)-acetylcytidine(34) in elongator tRNA(Met) + AMP + diphosphate. Its function is as follows. Catalyzes the formation of N(4)-acetylcytidine (ac(4)C) at the wobble position of elongator tRNA(Met), using acetate and ATP as substrates. First activates an acetate ion to form acetyladenylate (Ac-AMP) and then transfers the acetyl group to tRNA to form ac(4)C34. This Lactobacillus helveticus (strain DPC 4571) protein is tRNA(Met) cytidine acetate ligase.